Consider the following 260-residue polypeptide: Indole-3-glycerol phosphate synthase (260 aa).

This sequence belongs to the TrpC family.

It carries out the reaction 1-(2-carboxyphenylamino)-1-deoxy-D-ribulose 5-phosphate + H(+) = (1S,2R)-1-C-(indol-3-yl)glycerol 3-phosphate + CO2 + H2O. Its pathway is amino-acid biosynthesis; L-tryptophan biosynthesis; L-tryptophan from chorismate: step 4/5. The protein is Indole-3-glycerol phosphate synthase of Staphylococcus aureus (strain MRSA252).